Consider the following 253-residue polypeptide: MSSIGTGYDLGLFFSPDGRLFQAEYAYKAVENASTCIGIKCEDGVILALEKVVTSKLLKPRVNNRIGSVDRHIGIATTGFIPDGQHIVKRARDEATSWRDNYGSPIPGTVIADRLGNYVQLFTCYSSVRPFGVMSFVATYDSEGPHLYMVEPNGVYWGYNGAAAGKGRQVARNELEKLNFSSLKMKDAVKEAARILYATHDEENNKEHEIEMTWVGVETNGIHTPVPDELLQEAEAYARRIADGEEEDIAMQE.

Ser104 carries the phosphoserine modification.

The protein belongs to the peptidase T1A family. As to quaternary structure, the 26S proteasome consists of a 20S proteasome core and two 19S regulatory subunits. The 20S proteasome core is composed of 28 subunits that are arranged in four stacked rings, resulting in a barrel-shaped structure. The two end rings are each formed by seven alpha subunits, and the two central rings are each formed by seven beta subunits. The catalytic chamber with the active sites is on the inside of the barrel.

Its subcellular location is the cytoplasm. The protein resides in the nucleus. In terms of biological role, the proteasome is a multicatalytic proteinase complex which is characterized by its ability to cleave peptides with Arg, Phe, Tyr, Leu, and Glu adjacent to the leaving group at neutral or slightly basic pH. The proteasome has an ATP-dependent proteolytic activity. The sequence is that of Probable proteasome subunit alpha type-7 (pre10) from Schizosaccharomyces pombe (strain 972 / ATCC 24843) (Fission yeast).